The sequence spans 298 residues: MWCPSVSLSVWANAWLAGKAAPDDLLDALSLWTPMQSVAAYDAVAAGHTGLPWPDIHDAGTVSLLQTLRTAVGRPTKSTPNDPHRLRGTINVVLPVPGDVHGLVTGTQFEHDALAASEAVIITNPHDSSTAVGLVPEYSYSNPEQYTNSEETRLSELSALSWVVYSLPGVPLFDHHELGDAEYALRSAVRSAADALGTIELNSATADITDPRGLVEQLLESSRQHRVPDHAPSRALRVLENAAHVDAIISVSTGLTPIGTHSLSDIEIASNALRPLTAVVRSARMAAVNAILHSAWPD.

This sequence to M.tuberculosis Rv1486c, M.bovis Mb1522c and M.avium MAV321.

This is an uncharacterized protein from Mycobacterium leprae (strain TN).